The following is a 60-amino-acid chain: Potassium channel toxin alpha-KTx 12.7 (60 aa).

Positions 1 to 22 are cleaved as a signal peptide; that stretch reads MSNMPVLIITLLLFSMYISTAA. Intrachain disulfides connect Cys30–Cys51, Cys36–Cys56, and Cys40–Cys58.

This sequence belongs to the short scorpion toxin superfamily. Potassium channel inhibitor family. Alpha-KTx 12 subfamily. As to expression, expressed by the venom gland.

Its subcellular location is the secreted. Inhibits voltage-gated potassium channels. The protein is Potassium channel toxin alpha-KTx 12.7 of Lychas mucronatus (Chinese swimming scorpion).